We begin with the raw amino-acid sequence, 370 residues long: MQLVAALAALGALVAPAVAYPHAPMNETLVDVQLTAVGNTMVKATITNKGDSVLNMLKFNTIMDENPTRKVMVFQDGAEVPFTGMMPRYLMSDLTEEFFTTLAPQASVEHSFDIATTHDLSAGGKYVISASGAIPTAEEYSTTITSTALYESNELHMEIDGTQAAAVEQAMKFTPEMQSIHSRALQKRTKIVGGSCNQNTLRATQNALGNSARLAQAASRAASQNAAKFQEYFRTNDANAKQRVIARLNSVARESSSANGGSTTYYCSDTMGGCKPRVLAYTLPSRNLVVNCPIYYNLPPLTKQCHAQDQATTTLHEFTHNPAVASPHCQDYAYGYQQCISLPAAKAVQNADNYALFANGMFYSLFTIIF.

The first 19 residues, 1–19 (MQLVAALAALGALVAPAVA), serve as a signal peptide directing secretion. Residues 20–188 (YPHAPMNETL…SIHSRALQKR (169 aa)) constitute a propeptide that is removed on maturation. 2 disulfide bridges follow: Cys-196-Cys-267 and Cys-274-Cys-292. His-316 provides a ligand contact to Zn(2+). The active site involves Glu-317. Residues His-320 and Asp-331 each coordinate Zn(2+).

The protein belongs to the peptidase M35 family. The cofactor is Zn(2+).

It localises to the secreted. The enzyme catalyses Preferential cleavage of bonds with hydrophobic residues in P1'. Also 3-Asn-|-Gln-4 and 8-Gly-|-Ser-9 bonds in insulin B chain.. In terms of biological role, probable secreted metalloprotease that shows high activities on basic nuclear substrates such as histone and protamine. May be involved in virulence. This chain is Probable neutral protease 2 homolog ARB_03949, found in Arthroderma benhamiae (strain ATCC MYA-4681 / CBS 112371) (Trichophyton mentagrophytes).